A 130-amino-acid chain; its full sequence is Small ribosomal subunit protein uS11 (130 aa).

The protein belongs to the universal ribosomal protein uS11 family. Part of the 30S ribosomal subunit. Interacts with proteins S7 and S18. Binds to IF-3.

Located on the platform of the 30S subunit, it bridges several disparate RNA helices of the 16S rRNA. Forms part of the Shine-Dalgarno cleft in the 70S ribosome. This Kosmotoga olearia (strain ATCC BAA-1733 / DSM 21960 / TBF 19.5.1) protein is Small ribosomal subunit protein uS11.